We begin with the raw amino-acid sequence, 177 residues long: Transcription antitermination protein NusB (177 aa).

Positions 1–35 (MTDSTHPTPSARPPRQPRTGTTGTGARKAGSKSGR) are disordered. Residues 17 to 28 (PRTGTTGTGARK) are compositionally biased toward low complexity.

It belongs to the NusB family.

Involved in transcription antitermination. Required for transcription of ribosomal RNA (rRNA) genes. Binds specifically to the boxA antiterminator sequence of the ribosomal RNA (rrn) operons. This chain is Transcription antitermination protein NusB, found in Acidovorax sp. (strain JS42).